A 404-amino-acid polypeptide reads, in one-letter code: Chorismate synthase (404 aa).

2 residues coordinate NADP(+): Arg-40 and Arg-46. FMN-binding positions include 133–135, 266–267, Gly-313, 328–332, and Arg-354; these read RSS, QA, and KPIPT. The disordered stretch occupies residues 283 to 320; it reads PGSQVHDPIEPREDGAQAYPRRTNHAGGTEGGTTTGMP. Residues 337–357 are disordered; the sequence is LDSVDTATGEPEPTRYERSDI.

It belongs to the chorismate synthase family. Homotetramer. FMNH2 is required as a cofactor.

The enzyme catalyses 5-O-(1-carboxyvinyl)-3-phosphoshikimate = chorismate + phosphate. Its pathway is metabolic intermediate biosynthesis; chorismate biosynthesis; chorismate from D-erythrose 4-phosphate and phosphoenolpyruvate: step 7/7. Functionally, catalyzes the anti-1,4-elimination of the C-3 phosphate and the C-6 proR hydrogen from 5-enolpyruvylshikimate-3-phosphate (EPSP) to yield chorismate, which is the branch point compound that serves as the starting substrate for the three terminal pathways of aromatic amino acid biosynthesis. This reaction introduces a second double bond into the aromatic ring system. The sequence is that of Chorismate synthase from Salinibacter ruber (strain DSM 13855 / M31).